An 81-amino-acid polypeptide reads, in one-letter code: Probable antimicrobial peptide Con13 (81 aa).

Positions M1–A22 are cleaved as a signal peptide. A propeptide spanning residues E66–S81 is cleaved from the precursor.

It belongs to the non-disulfide-bridged peptide (NDBP) superfamily. Long chain multifunctional peptide (group 2) family. As to expression, expressed by the venom gland.

The protein localises to the secreted. The protein resides in the target cell membrane. In terms of biological role, at high concentrations, acts as a pore former in cellular membranes and causes the leakage of the cells. At submicromolar concentrations, degranulates granulocytes and has a weak hemolytic activity against human erythrocytes. Also strongly inhibits the production of superoxide anions. Has a strong antibacterial activity against Gram-negative bacteria but is less active against Gram-positive bacteria. Also has antifungal activity. In Opisthacanthus cayaporum (South American scorpion), this protein is Probable antimicrobial peptide Con13.